Reading from the N-terminus, the 62-residue chain is MAKCDICSKDVLFGLKVSHSNRKTNRTWKPNIRRIKIIENGTSKTANVCTRCLRSNKVTRAI.

Belongs to the bacterial ribosomal protein bL28 family.

The chain is Large ribosomal subunit protein bL28 from Acetivibrio thermocellus (strain ATCC 27405 / DSM 1237 / JCM 9322 / NBRC 103400 / NCIMB 10682 / NRRL B-4536 / VPI 7372) (Clostridium thermocellum).